A 431-amino-acid polypeptide reads, in one-letter code: MTKFTTFFTENNIEIKNKKFLLAASGGPDSVALLKMLVNFLPNPSEQLIVAHLDHCLRDDSFLESQLLQRLTSALKVKLVEKKWPVELHPQAGVEAKAREYRYAFLAKVGRKYQTDYLLTAHHGDDLIENILLKFIRSGDVAEMNSLQIVGNLGSMKLLRPLVKYSKDELLKYDKDHHLDFIEDKTNFEDDTLRNRLRHHVVPLLKKETSHLVKNANHFSESVALLSKCQSDLFDSLPSPINFSKALRGKKEDIARLNTHEAAAFFDYLIYKKWHQRIHFDEIDLNKNVIFNKENFQLLFYQKYYYLINRNELAVIDPKRKLVKLNEKFSFNGKKYLITQDEKSQKLAGYFYGEKAKYLEVGSLPQGSTLKLATGKQTKAKKKFAENGIPLALRPYCLTVWQEENPVYVESVYQNQEYNPNFIRYNVYIYF.

25–30 is a binding site for ATP; sequence SGGPDS.

It belongs to the tRNA(Ile)-lysidine synthase family.

It is found in the cytoplasm. The enzyme catalyses cytidine(34) in tRNA(Ile2) + L-lysine + ATP = lysidine(34) in tRNA(Ile2) + AMP + diphosphate + H(+). Ligates lysine onto the cytidine present at position 34 of the AUA codon-specific tRNA(Ile) that contains the anticodon CAU, in an ATP-dependent manner. Cytidine is converted to lysidine, thus changing the amino acid specificity of the tRNA from methionine to isoleucine. This chain is tRNA(Ile)-lysidine synthase, found in Lactobacillus johnsonii (strain CNCM I-12250 / La1 / NCC 533).